The following is a 126-amino-acid chain: Small ribosomal subunit protein uS12 (126 aa).

Positions 1–28 (MPTINQLVRKGRQSETTKSKSPALQDCP) are disordered. Aspartate 89 carries the post-translational modification 3-methylthioaspartic acid. Positions 103 to 126 (DTQGVKDRKQARSKYGAKRAKAGK) are disordered. Basic residues predominate over residues 113–126 (ARSKYGAKRAKAGK).

It belongs to the universal ribosomal protein uS12 family. Part of the 30S ribosomal subunit. Contacts proteins S8 and S17. May interact with IF1 in the 30S initiation complex.

In terms of biological role, with S4 and S5 plays an important role in translational accuracy. Functionally, interacts with and stabilizes bases of the 16S rRNA that are involved in tRNA selection in the A site and with the mRNA backbone. Located at the interface of the 30S and 50S subunits, it traverses the body of the 30S subunit contacting proteins on the other side and probably holding the rRNA structure together. The combined cluster of proteins S8, S12 and S17 appears to hold together the shoulder and platform of the 30S subunit. This chain is Small ribosomal subunit protein uS12, found in Paraburkholderia phytofirmans (strain DSM 17436 / LMG 22146 / PsJN) (Burkholderia phytofirmans).